The sequence spans 365 residues: Sulfotransferase 2B1 (365 aa).

70–75 serves as a coordination point for 3'-phosphoadenylyl sulfate; that stretch reads KSGTTW. Trp-98, Trp-103, and His-125 together coordinate substrate. His-125 functions as the Proton acceptor in the catalytic mechanism. 3'-phosphoadenylyl sulfate-binding positions include Arg-147, Ser-155, Tyr-210, 244–249, and 274–276; these read STFSAM and RKG. The disordered stretch occupies residues 303 to 365; that stretch reads GMPTFPWDED…ASETPHPRPS (63 aa). Over residues 309-325 the composition is skewed to acidic residues; it reads WDEDPEEDGSPDPEPSP. Ser-348 carries the phosphoserine modification.

This sequence belongs to the sulfotransferase 1 family. Post-translationally, phosphorylated. As to expression, expressed in the stratum granulosum-stratum corneum junction in the skin (at protein level). Expressed highly in placenta, prostate and trachea and lower expression in the small intestine and lung.

The protein resides in the cytoplasm. It is found in the cytosol. Its subcellular location is the microsome. The protein localises to the nucleus. It catalyses the reaction an alcohol + 3'-phosphoadenylyl sulfate = an alkyl sulfate + adenosine 3',5'-bisphosphate + H(+). The enzyme catalyses 3beta-hydroxyandrost-5-en-17-one + 3'-phosphoadenylyl sulfate = dehydroepiandrosterone 3-sulfate + adenosine 3',5'-bisphosphate + H(+). The catalysed reaction is (24S)-hydroxycholesterol + 3'-phosphoadenylyl sulfate = (24S)-hydroxycholesterol 3-sulfate + adenosine 3',5'-bisphosphate + H(+). It carries out the reaction cholesterol + 3'-phosphoadenylyl sulfate = cholesterol sulfate + adenosine 3',5'-bisphosphate + H(+). It catalyses the reaction pregnenolone + 3'-phosphoadenylyl sulfate = pregnenolone sulfate + adenosine 3',5'-bisphosphate + H(+). Sulfotransferase that utilizes 3'-phospho-5'-adenylyl sulfate (PAPS) as sulfonate donor to catalyze the sulfate conjugation. Responsible for the sulfation of cholesterol. Catalyzes sulfation of the 3beta-hydroxyl groups of steroids, such as, pregnenolone and dehydroepiandrosterone (DHEA). Preferentially sulfonates cholesterol, while it also has significant activity with pregnenolone and DHEA. Plays a role in epidermal cholesterol metabolism and in the regulation of epidermal proliferation and differentiation. Functionally, sulfonates pregnenolone but not cholesterol. This is Sulfotransferase 2B1 (SULT2B1) from Homo sapiens (Human).